The chain runs to 707 residues: Alpha-hemolysin translocation ATP-binding protein HlyB (707 aa).

The Peptidase C39 domain maps to D2–I125. H83 is a catalytic residue. In terms of domain architecture, ABC transmembrane type-1 spans F154–Q436. The next 5 helical transmembrane spans lie at L158–V178, L191–L211, A269–Y289, L295–L315, and A387–I407. One can recognise an ABC transporter domain in the interval I468–Q703. G502 to S509 serves as a coordination point for ATP.

This sequence belongs to the ABC transporter superfamily. Protein-1 exporter (TC 3.A.1.109) family.

Its subcellular location is the cell membrane. Involved in the export of hemolysin A. In Proteus vulgaris, this protein is Alpha-hemolysin translocation ATP-binding protein HlyB (hlyB).